The chain runs to 122 residues: Large ribosomal subunit protein bL12 (122 aa).

This sequence belongs to the bacterial ribosomal protein bL12 family. As to quaternary structure, homodimer. Part of the ribosomal stalk of the 50S ribosomal subunit. Forms a multimeric L10(L12)X complex, where L10 forms an elongated spine to which 2 to 4 L12 dimers bind in a sequential fashion. Binds GTP-bound translation factors.

Functionally, forms part of the ribosomal stalk which helps the ribosome interact with GTP-bound translation factors. Is thus essential for accurate translation. This chain is Large ribosomal subunit protein bL12, found in Clostridium botulinum (strain 657 / Type Ba4).